The following is a 143-amino-acid chain: Transcriptional regulator MraZ (143 aa).

SpoVT-AbrB domains lie at 5–47 (EYKH…SLKE) and 76–119 (ACEC…SEEN).

Belongs to the MraZ family. In terms of assembly, forms oligomers.

The protein localises to the cytoplasm. It localises to the nucleoid. This chain is Transcriptional regulator MraZ, found in Caldicellulosiruptor saccharolyticus (strain ATCC 43494 / DSM 8903 / Tp8T 6331).